A 243-amino-acid polypeptide reads, in one-letter code: Hydroxyacylglutathione hydrolase (243 aa).

His52, His54, Asp56, His57, His108, Asp125, and His163 together coordinate Zn(2+).

Belongs to the metallo-beta-lactamase superfamily. Glyoxalase II family. In terms of assembly, monomer. Zn(2+) serves as cofactor.

The enzyme catalyses an S-(2-hydroxyacyl)glutathione + H2O = a 2-hydroxy carboxylate + glutathione + H(+). Its pathway is secondary metabolite metabolism; methylglyoxal degradation; (R)-lactate from methylglyoxal: step 2/2. Thiolesterase that catalyzes the hydrolysis of S-D-lactoyl-glutathione to form glutathione and D-lactic acid. This chain is Hydroxyacylglutathione hydrolase, found in Haemophilus influenzae (strain PittGG).